The primary structure comprises 126 residues: MIRVRRGYIARRRRTKFFLFASTFRGAHSRLTRTTTQQKMRALVSAHRDRGRQKRDFRRLWITRINAVTRENGGSYSRLIHDLYKGQLLLNRKIPAQLAISNGNCLYMISNEIGSANKEIGRSSSE.

Belongs to the bacterial ribosomal protein bL20 family.

The protein resides in the plastid. Its subcellular location is the chloroplast. In terms of biological role, binds directly to 23S ribosomal RNA and is necessary for the in vitro assembly process of the 50S ribosomal subunit. It is not involved in the protein synthesizing functions of that subunit. This is Large ribosomal subunit protein bL20c from Illicium oligandrum (Star anise).